The following is a 279-amino-acid chain: Tryptophan synthase alpha chain (279 aa).

Residues Glu-50 and Asp-61 each act as proton acceptor in the active site.

It belongs to the TrpA family. Tetramer of two alpha and two beta chains.

It carries out the reaction (1S,2R)-1-C-(indol-3-yl)glycerol 3-phosphate + L-serine = D-glyceraldehyde 3-phosphate + L-tryptophan + H2O. The protein operates within amino-acid biosynthesis; L-tryptophan biosynthesis; L-tryptophan from chorismate: step 5/5. In terms of biological role, the alpha subunit is responsible for the aldol cleavage of indoleglycerol phosphate to indole and glyceraldehyde 3-phosphate. In Azorhizobium caulinodans (strain ATCC 43989 / DSM 5975 / JCM 20966 / LMG 6465 / NBRC 14845 / NCIMB 13405 / ORS 571), this protein is Tryptophan synthase alpha chain.